Consider the following 565-residue polypeptide: Ubiquitin carboxyl-terminal hydrolase 21 (565 aa).

The span at 1-14 shows a compositional bias: basic and acidic residues; sequence MPQASEHRLGRTRE. A disordered region spans residues 1 to 103; sequence MPQASEHRLG…PPPTVALPLP (103 aa). Over residues 48 to 57 the composition is skewed to pro residues; it reads MLRPLPPRPG. A compositionally biased stretch (basic and acidic residues) spans 58–70; it reads LPDERLKKLELGR. A Nuclear export signal motif is present at residues 134–152; it reads ELGAALSRLALRPEPPTLR. The region spanning 212-558 is the USP domain; sequence VGLRNLGNTC…EGYVLFYQLM (347 aa). C221 (nucleophile) is an active-site residue. C384, C387, C437, and C440 together coordinate Zn(2+). Residue H518 is the Proton acceptor of the active site.

The protein belongs to the peptidase C19 family. USP21 subfamily. Interacts with BEND3. Highly expressed in heart, pancreas and skeletal muscle. Also expressed in brain, placenta, liver and kidney, and at very low level in lung.

It is found in the cytoplasm. The protein resides in the nucleus. The catalysed reaction is Thiol-dependent hydrolysis of ester, thioester, amide, peptide and isopeptide bonds formed by the C-terminal Gly of ubiquitin (a 76-residue protein attached to proteins as an intracellular targeting signal).. Functionally, deubiquitinates histone H2A, a specific tag for epigenetic transcriptional repression, thereby acting as a coactivator. Deubiquitination of histone H2A releaves the repression of di- and trimethylation of histone H3 at 'Lys-4', resulting in regulation of transcriptional initiation. Regulates gene expression via histone H2A deubiquitination. Deubiquitinates BAZ2A/TIP5 leading to its stabilization. Also capable of removing NEDD8 from NEDD8 conjugates but has no effect on Sentrin-1 conjugates. Also acts as a negative regulator of the ribosome quality control (RQC) by mediating deubiquitination of 40S ribosomal proteins RPS10/eS10 and RPS20/uS10, thereby antagonizing ZNF598-mediated 40S ubiquitination. This Homo sapiens (Human) protein is Ubiquitin carboxyl-terminal hydrolase 21.